A 364-amino-acid polypeptide reads, in one-letter code: Anhydro-N-acetylmuramic acid kinase (364 aa).

ATP is bound at residue 11-18 (GSSLDGID).

It belongs to the anhydro-N-acetylmuramic acid kinase family.

The catalysed reaction is 1,6-anhydro-N-acetyl-beta-muramate + ATP + H2O = N-acetyl-D-muramate 6-phosphate + ADP + H(+). The protein operates within amino-sugar metabolism; 1,6-anhydro-N-acetylmuramate degradation. Its pathway is cell wall biogenesis; peptidoglycan recycling. Its function is as follows. Catalyzes the specific phosphorylation of 1,6-anhydro-N-acetylmuramic acid (anhMurNAc) with the simultaneous cleavage of the 1,6-anhydro ring, generating MurNAc-6-P. Is required for the utilization of anhMurNAc either imported from the medium or derived from its own cell wall murein, and thus plays a role in cell wall recycling. The polypeptide is Anhydro-N-acetylmuramic acid kinase (Pseudomonas savastanoi pv. phaseolicola (strain 1448A / Race 6) (Pseudomonas syringae pv. phaseolicola (strain 1448A / Race 6))).